Consider the following 317-residue polypeptide: Transaldolase (317 aa).

The Schiff-base intermediate with substrate role is filled by Lys132.

This sequence belongs to the transaldolase family. Type 1 subfamily. Homodimer.

It localises to the cytoplasm. It carries out the reaction D-sedoheptulose 7-phosphate + D-glyceraldehyde 3-phosphate = D-erythrose 4-phosphate + beta-D-fructose 6-phosphate. The protein operates within carbohydrate degradation; pentose phosphate pathway; D-glyceraldehyde 3-phosphate and beta-D-fructose 6-phosphate from D-ribose 5-phosphate and D-xylulose 5-phosphate (non-oxidative stage): step 2/3. Functionally, transaldolase is important for the balance of metabolites in the pentose-phosphate pathway. In Shewanella frigidimarina (strain NCIMB 400), this protein is Transaldolase.